We begin with the raw amino-acid sequence, 449 residues long: Heterogeneous nuclear ribonucleoprotein H2 (449 aa).

Met1 is modified (N-acetylmethionine). Met2 is subject to N-acetylmethionine; in Heterogeneous nuclear ribonucleoprotein H2, N-terminally processed. An RRM 1 domain is found at 11 to 90 (FVVKVRGLPW…RYVEVFKSNS (80 aa)). Ser23 is modified (phosphoserine). Lys35 is covalently cross-linked (Glycyl lysine isopeptide (Lys-Gly) (interchain with G-Cter in SUMO2)). Phosphoserine is present on residues Ser54 and Ser63. Lys87 is covalently cross-linked (Glycyl lysine isopeptide (Lys-Gly) (interchain with G-Cter in SUMO2)). Residue Ser90 is modified to Phosphoserine. Residue Lys98 forms a Glycyl lysine isopeptide (Lys-Gly) (interchain with G-Cter in SUMO2) linkage. Residues 111-188 (GFVRLRGLPF…RYIEIFKSSR (78 aa)) form the RRM 2 domain. Arg233 carries the post-translational modification Dimethylated arginine; alternate. Omega-N-methylarginine; alternate is present on Arg233. One copy of the 1-1 repeat lies at 234 to 249 (GAYGGGYGGYDDYGGY). Residues 234–433 (GAYGGGYGGY…YGGQSSMSGY (200 aa)) form a 2 X 16 AA Gly-rich approximate repeats region. Tyr246 bears the Phosphotyrosine mark. The RRM 3 domain occupies 289–364 (HCVHMRGLPY…RYVELFLNST (76 aa)). Ser310 is subject to Phosphoserine. A run of 3 repeats spans residues 354-372 (HRYVELFLNSTAGTSGGAY), 374-392 (HSYVELFLNSTAGASGGAY), and 418-433 (GGYGGGYGGQSSMSGY). The segment at 354 to 392 (HRYVELFLNSTAGTSGGAYDHSYVELFLNSTAGASGGAY) is 2 X 19 AA perfect repeats.

As to quaternary structure, component of a ribonucleoprotein complex containing mRNAs and RNA-binding proteins including DDX5, HNRNPH2 and SRSF1 as well as splicing regulator ARVCF. Interacts with TXNL4/DIM1. As to expression, expressed ubiquitously.

The protein resides in the nucleus. The protein localises to the nucleoplasm. Functionally, this protein is a component of the heterogeneous nuclear ribonucleoprotein (hnRNP) complexes which provide the substrate for the processing events that pre-mRNAs undergo before becoming functional, translatable mRNAs in the cytoplasm. Binds poly(RG). This is Heterogeneous nuclear ribonucleoprotein H2 (HNRNPH2) from Homo sapiens (Human).